The chain runs to 317 residues: Transcription factor MYB35 (317 aa).

HTH myb-type domains follow at residues 9 to 65 (KSNV…RPDL) and 66 to 116 (KHDS…KKKL). DNA-binding regions (H-T-H motif) lie at residues 37–61 (WSLI…TNYL) and 89–112 (WSSI…NTKL).

As to expression, inflorescences-specific. Accumulates in anthers, especially in tapetum and meiocytes/microsporocytes and microspores during anther development.

The protein resides in the nucleus. Functionally, required for anther development and early tapetal function during microspore maturation. Regulates callose dissolution required for microspores release from the tetrads. The protein is Transcription factor MYB35 of Arabidopsis thaliana (Mouse-ear cress).